Here is an 89-residue protein sequence, read N- to C-terminus: uncharacterized protein (89 aa).

A run of 2 helical transmembrane segments spans residues 11–31 and 63–83; these read IFGA…PIAL and AAIS…TVVF.

It is found in the cell membrane. This is an uncharacterized protein from Methanocaldococcus jannaschii (strain ATCC 43067 / DSM 2661 / JAL-1 / JCM 10045 / NBRC 100440) (Methanococcus jannaschii).